The primary structure comprises 612 residues: Peroxisomal carnitine O-octanoyltransferase (612 aa).

Met1 is modified (N-acetylmethionine). An N6-succinyllysine mark is found at Lys40 and Lys57. The active-site Proton acceptor is the His327. Residues Lys406 and 410 to 417 each bind CoA; that span reads KEEALHPD. Lys406 is subject to N6-acetyllysine; alternate. N6-succinyllysine; alternate is present on Lys406. (R)-carnitine-binding residues include Tyr439, Thr441, and Thr452. A Microbody targeting signal motif is present at residues 610 to 612; sequence AHL.

Belongs to the carnitine/choline acetyltransferase family.

It is found in the peroxisome. The enzyme catalyses octanoyl-CoA + (R)-carnitine = O-octanoyl-(R)-carnitine + CoA. The catalysed reaction is 4,8-dimethylnonanoyl-CoA + (R)-carnitine = O-4,8-dimethylnonanoyl-(R)-carnitine + CoA. It functions in the pathway lipid metabolism; fatty acid beta-oxidation. In terms of biological role, beta-oxidation of fatty acids. The highest activity concerns the C6 to C10 chain length substrate. The sequence is that of Peroxisomal carnitine O-octanoyltransferase (Crot) from Mus musculus (Mouse).